A 145-amino-acid chain; its full sequence is D-aminoacyl-tRNA deacylase (145 aa).

Positions 137 to 138 match the Gly-cisPro motif, important for rejection of L-amino acids motif; the sequence is GP.

Belongs to the DTD family. As to quaternary structure, homodimer.

The protein resides in the cytoplasm. It catalyses the reaction glycyl-tRNA(Ala) + H2O = tRNA(Ala) + glycine + H(+). It carries out the reaction a D-aminoacyl-tRNA + H2O = a tRNA + a D-alpha-amino acid + H(+). Functionally, an aminoacyl-tRNA editing enzyme that deacylates mischarged D-aminoacyl-tRNAs. Also deacylates mischarged glycyl-tRNA(Ala), protecting cells against glycine mischarging by AlaRS. Acts via tRNA-based rather than protein-based catalysis; rejects L-amino acids rather than detecting D-amino acids in the active site. By recycling D-aminoacyl-tRNA to D-amino acids and free tRNA molecules, this enzyme counteracts the toxicity associated with the formation of D-aminoacyl-tRNA entities in vivo and helps enforce protein L-homochirality. This chain is D-aminoacyl-tRNA deacylase, found in Salmonella typhi.